The sequence spans 31 residues: Photosystem II reaction center protein T (31 aa).

Residues 3-23 (SFAYILILTLAIATLFFAIAF) form a helical membrane-spanning segment.

It belongs to the PsbT family. As to quaternary structure, PSII is composed of 1 copy each of membrane proteins PsbA, PsbB, PsbC, PsbD, PsbE, PsbF, PsbH, PsbI, PsbJ, PsbK, PsbL, PsbM, PsbT, PsbX, PsbY, PsbZ, Psb30/Ycf12, peripheral proteins PsbO, CyanoQ (PsbQ), PsbU, PsbV and a large number of cofactors. It forms dimeric complexes.

Its subcellular location is the cellular thylakoid membrane. Found at the monomer-monomer interface of the photosystem II (PS II) dimer, plays a role in assembly and dimerization of PSII. PSII is a light-driven water plastoquinone oxidoreductase, using light energy to abstract electrons from H(2)O, generating a proton gradient subsequently used for ATP formation. The sequence is that of Photosystem II reaction center protein T from Synechococcus sp. (strain WH7803).